The sequence spans 183 residues: Orotate phosphoribosyltransferase (183 aa).

Residues Arg-100, Lys-101, Lys-104, His-106, and 126–134 each bind 5-phospho-alpha-D-ribose 1-diphosphate; that span reads EDVVTTGSS. Orotate contacts are provided by Thr-130 and Arg-158.

The protein belongs to the purine/pyrimidine phosphoribosyltransferase family. PyrE subfamily. As to quaternary structure, homodimer. It depends on Mg(2+) as a cofactor.

The catalysed reaction is orotidine 5'-phosphate + diphosphate = orotate + 5-phospho-alpha-D-ribose 1-diphosphate. It functions in the pathway pyrimidine metabolism; UMP biosynthesis via de novo pathway; UMP from orotate: step 1/2. Its function is as follows. Catalyzes the transfer of a ribosyl phosphate group from 5-phosphoribose 1-diphosphate to orotate, leading to the formation of orotidine monophosphate (OMP). The chain is Orotate phosphoribosyltransferase from Aquifex aeolicus (strain VF5).